The sequence spans 462 residues: UPF0236 protein TTE2489 (462 aa).

The protein belongs to the UPF0236 family.

This is UPF0236 protein TTE2489 from Caldanaerobacter subterraneus subsp. tengcongensis (strain DSM 15242 / JCM 11007 / NBRC 100824 / MB4) (Thermoanaerobacter tengcongensis).